We begin with the raw amino-acid sequence, 71 residues long: Small ribosomal subunit protein bS21 (71 aa).

The protein belongs to the bacterial ribosomal protein bS21 family.

The sequence is that of Small ribosomal subunit protein bS21 from Dichelobacter nodosus (strain VCS1703A).